A 220-amino-acid chain; its full sequence is MTTSESVQETLGLDFPHPSKPRVLLAASGSVAAIKFESLCRSFSEWAEVRAVATKASLHFIDRTSLPSNIILYTDDDEWSTWKKIGDEVLHIELRKWADIMVIAPLSANTLAKIAGGLCDNLLTCIVRAWDYSKPLFVAPAMNTFMWNNPFTSRHLETINLLGISLVPPITKRLACGDYGNGAMAEPSVIDSTVRLACKRQPLNTNSSPVVPAGRNLPSS.

Residues 29–31 (GSV) and 54–56 (TKA) each bind FMN. The Proton donor role is filled by His91. FMN is bound by residues 107-110 (SANT) and Ala141. N-[(R)-4-phosphopantothenoyl]-L-cysteine-binding residues include Asn143, Arg173, and Ala175. The active-site Proton donor is the Cys176. Met184 is a binding site for N-[(R)-4-phosphopantothenoyl]-L-cysteine.

This sequence belongs to the HFCD (homooligomeric flavin containing Cys decarboxylase) superfamily. As to quaternary structure, forms homotrimers. Interacts with HIP1. Interacts with HD1 in the dark. FMN serves as cofactor. As to expression, expressed in root meristem, shoot apical meristem (SAM), intercalary meristem, floral meristem, embryo and tip of the coleoptile before true leaf emergence.

It localises to the nucleus. The enzyme catalyses N-[(R)-4-phosphopantothenoyl]-L-cysteine + H(+) = (R)-4'-phosphopantetheine + CO2. It functions in the pathway cofactor biosynthesis; coenzyme A biosynthesis; CoA from (R)-pantothenate: step 3/5. Its function is as follows. Catalyzes the decarboxylation of 4'-phosphopantothenoylcysteine to 4'-phosphopantetheine, a key step in coenzyme A biosynthesis. Involved in salt and osmotic tolerance, and light-regulated plant growth. Trimerization of HAL3 recruits and activates the E3 ubiquitin-protein ligase HIP1, which leads to the degradation of cell cycle suppressors, resulting in enhancement of cell division and plant growth. HAL3 function in cell division seems to be independent from its PPC decarboxylase activity. Acts as a positive regulator of flowering by binding to HD1 in the dark. This chain is Phosphopantothenoylcysteine decarboxylase, found in Oryza sativa subsp. japonica (Rice).